The following is a 476-amino-acid chain: MTSLLALSPLILVCATAIVVMLTIAWRRHHELTATLTVVGLNLALAAQVVAWWQAPVSVTPLMTVDGLAVFGGVLILIATLACATLGHAYLEGAQGPREEYYLLLLCAAAGGLALVSSRHLAALFFGLELLSMPLYGMLAYTYRERGALEAGIKYMVLSAAASAFLLFGMALLYSRTGHLDFAGLGEALATAGGDGWLMAGMGMMLIGLGFKLSIVPFHLWTPDVYEGSPAPAATFLASASKVAVLLVLLRLLQSSPVQDAWLHSLLAVLAFVTMLVGNLLALTQNDLKRLLGYSSIAHFGYLLVALVVNDGLAAETAALYLVTYVLTTLGAFGVVTLLSSPYSGADASQLHHYRGLFWRRPYLTAVLTVMMLSLAGIPFTAGFIGKFYIVAVGVEASRWWLVGGVVAGSAIGLYYYLRVMVTLFLPEPGMQRRDATTDWAQRAGGVVVLGLAALVVVLGVYPAPMIDWVRFMVAG.

14 helical membrane-spanning segments follow: residues 4 to 24 (LLAL…MLTI), 32 to 52 (LTAT…VVAW), 67 to 87 (GLAV…ATLG), 100 to 117 (EYYL…ALVS), 121 to 141 (LAAL…MLAY), 155 to 175 (YMVL…LLYS), 198 to 218 (LMAG…IVPF), 230 to 250 (PAPA…LVLL), 263 to 283 (LHSL…LLAL), 291 to 311 (LLGY…VVND), 319 to 339 (ALYL…VTLL), 366 to 386 (AVLT…GFIG), 406 to 426 (VVAG…TLFL), and 447 to 467 (VVVL…APMI).

It belongs to the complex I subunit 2 family. NDH-1 is composed of 14 different subunits. Subunits NuoA, H, J, K, L, M, N constitute the membrane sector of the complex.

It localises to the cell inner membrane. The catalysed reaction is a quinone + NADH + 5 H(+)(in) = a quinol + NAD(+) + 4 H(+)(out). Functionally, NDH-1 shuttles electrons from NADH, via FMN and iron-sulfur (Fe-S) centers, to quinones in the respiratory chain. The immediate electron acceptor for the enzyme in this species is believed to be ubiquinone. Couples the redox reaction to proton translocation (for every two electrons transferred, four hydrogen ions are translocated across the cytoplasmic membrane), and thus conserves the redox energy in a proton gradient. This is NADH-quinone oxidoreductase subunit N from Chromohalobacter salexigens (strain ATCC BAA-138 / DSM 3043 / CIP 106854 / NCIMB 13768 / 1H11).